A 528-amino-acid chain; its full sequence is Probable feruloyl esterase B-1 (528 aa).

A signal peptide spans 1-19 (MMWWFLLIGLASAAATASS). 6 cysteine pairs are disulfide-bonded: cysteine 29/cysteine 78, cysteine 64/cysteine 117, cysteine 190/cysteine 445, cysteine 259/cysteine 276, cysteine 285/cysteine 295, and cysteine 505/cysteine 527. 2 N-linked (GlcNAc...) asparagine glycosylation sites follow: asparagine 83 and asparagine 101. Serine 191 acts as the Acyl-ester intermediate in catalysis. Residues aspartate 260, aspartate 263, alanine 265, aspartate 267, and isoleucine 269 each contribute to the Ca(2+) site. Asparagine 286, asparagine 354, and asparagine 385 each carry an N-linked (GlcNAc...) asparagine glycan. Residues aspartate 404 and histidine 444 each act as charge relay system in the active site.

This sequence belongs to the tannase family.

The protein localises to the secreted. The catalysed reaction is feruloyl-polysaccharide + H2O = ferulate + polysaccharide.. Involved in degradation of plant cell walls. Hydrolyzes the feruloyl-arabinose ester bond in arabinoxylans as well as the feruloyl-galactose and feruloyl-arabinose ester bonds in pectin. This Aspergillus fumigatus (strain ATCC MYA-4609 / CBS 101355 / FGSC A1100 / Af293) (Neosartorya fumigata) protein is Probable feruloyl esterase B-1 (faeB-1).